A 185-amino-acid chain; its full sequence is ATP-dependent protease subunit HslV (185 aa).

Residue Thr12 is part of the active site. Na(+)-binding residues include Ala168, Cys171, and Thr174.

It belongs to the peptidase T1B family. HslV subfamily. As to quaternary structure, a double ring-shaped homohexamer of HslV is capped on each side by a ring-shaped HslU homohexamer. The assembly of the HslU/HslV complex is dependent on binding of ATP.

It is found in the cytoplasm. It carries out the reaction ATP-dependent cleavage of peptide bonds with broad specificity.. Allosterically activated by HslU binding. Functionally, protease subunit of a proteasome-like degradation complex believed to be a general protein degrading machinery. This is ATP-dependent protease subunit HslV from Roseobacter denitrificans (strain ATCC 33942 / OCh 114) (Erythrobacter sp. (strain OCh 114)).